A 521-amino-acid chain; its full sequence is MEVLESGEQSVLQWDRKLSELSEPGETEALMYHTHFSELLDEFSQNVLGQLLNDPFLSEKSVSMEVEPSPTSPAPLIQAEHSYSLSEEPRAQSPFTHVAASDGFNDEEVESEKWYLSTEFPSATIKTEPITEEQPPGLVPSVTLTITAISTPFEKEESPLDMSAGGDSSCQTLIPKIKLEPHEVDQFLNFSPKEASVDQLHLPPTPPSSHSSDSEGSLSPNPRLHPFSLSQAHSPGRAMPRGPSALSTSPLLTAPHKLQGSGPLVLTEEEKRTLIAEGYPIPTKLPLTKSEEKALKKIRRKIKNKISAQESRRKKKEYMDSLEKKVESCSTENLELRKKVEVLENTNRTLLQQLQKLQTLVMGKVSRTCKLAGTQTGTCLMVVVLCFAVAFGSLFQGYGLYPSATKMALPSQHPLSEPYTASVVRSRNLLIYEEHSSLEESSSPASAGELGGWDRGSSLLRASSGLEALPEVDLPHFIISKETSLEKSVLLELQQHLVSSKLEGNETLKVVELERRVNATF.

The Cytoplasmic segment spans residues 1 to 378 (MEVLESGEQS…CKLAGTQTGT (378 aa)). Serine 93 is subject to Phosphoserine. Lysine 178 is covalently cross-linked (Glycyl lysine isopeptide (Lys-Gly) (interchain with G-Cter in SUMO2)). Position 191 is a phosphoserine (serine 191). The segment at 196–264 (SVDQLHLPPT…PHKLQGSGPL (69 aa)) is disordered. The segment covering 208–220 (SSHSSDSEGSLSP) has biased composition (low complexity). A bZIP domain is found at 294–357 (ALKKIRRKIK…RTLLQQLQKL (64 aa)). Positions 296 to 325 (KKIRRKIKNKISAQESRRKKKEYMDSLEKK) are basic motif. Positions 336–357 (LRKKVEVLENTNRTLLQQLQKL) are leucine-zipper. A helical; Signal-anchor for type II membrane protein transmembrane segment spans residues 379–399 (CLMVVVLCFAVAFGSLFQGYG). Residues 400–521 (LYPSATKMAL…ELERRVNATF (122 aa)) are Lumenal-facing. The S1P recognition signature appears at 427 to 430 (RNLL). N-linked (GlcNAc...) asparagine glycans are attached at residues asparagine 505 and asparagine 518.

This sequence belongs to the bZIP family. ATF subfamily. In terms of assembly, binds DNA as a dimer. Post-translationally, upon ER stress, translocated to the Golgi apparatus, where it is processed by regulated intramembrane proteolysis (RIP) to release the cytosol-facing N-terminal transcription factor domain. The cleavage is performed sequentially by site-1 and site-2 proteases (S1P/MBTPS1 and S2P/MBTPS2). N-glycosylated. In terms of processing, ubiquitinated by HRD1/SYVN1; undergoes 'Lys-48'-linked ubiquitination, followed by rapid proteasomal degradation under normal conditions. Upon ER stress, SYVN1 E3 ubiquitin-protein ligase dissociates from its substrate, ubiquitination does not occur and CREB3L2 is stabilized.

The protein resides in the endoplasmic reticulum membrane. Its subcellular location is the nucleus. In terms of biological role, transcription factor involved in unfolded protein response (UPR). In the absence of endoplasmic reticulum (ER) stress, inserted into ER membranes, with N-terminal DNA-binding and transcription activation domains oriented toward the cytosolic face of the membrane. In response to ER stress, transported to the Golgi, where it is cleaved in a site-specific manner by resident proteases S1P/MBTPS1 and S2P/MBTPS2. The released N-terminal cytosolic domain is translocated to the nucleus to effect transcription of specific target genes. Plays a critical role in chondrogenesis by activating the transcription of SEC23A, which promotes the transport and secretion of cartilage matrix proteins, and possibly that of ER biogenesis-related genes. In a neuroblastoma cell line, protects cells from ER stress-induced death. In vitro activates transcription of target genes via direct binding to the CRE site. The chain is Cyclic AMP-responsive element-binding protein 3-like protein 2 (Creb3l2) from Rattus norvegicus (Rat).